A 677-amino-acid chain; its full sequence is Mitochondrial 15S rRNA processing factor ppr3 (677 aa).

Residues 1–43 (MFTEICGKLRTCIYKKVAFSRPLGCNLRQLPVFRDFHNSVSCL) constitute a mitochondrion transit peptide. PPR repeat units follow at residues 210 to 244 (SVYL…QLKP), 245 to 279 (DNYT…KIEA), 280 to 314 (NTHV…SLQS), 317 to 351 (DDKT…PINP), 355 to 390 (SSRT…QWKP), and 569 to 604 (DIHV…SYLP).

The protein belongs to the CCM1 family. Binds to mitochondrial small subunit 15S rRNA.

The protein localises to the mitochondrion. Regulates mitochondrial small subunit maturation by controlling 15S rRNA 5'-end processing. Localizes to the 5' precursor of the 15S rRNA in a position that is subsequently occupied by mS47 in the mature yeast mtSSU. Uses structure and sequence-specific RNA recognition, binding to a single-stranded region of the precursor and specifically recognizing bases -6 to -1. The exchange of Ccm1 for mS47 is coupled to the irreversible removal of precursor rRNA that is accompanied by conformational changes of the mitoribosomal proteins uS5m and mS26. These conformational changes signal completion of 5'-end rRNA processing through protection of the mature 5'-end of the 15S rRNA and stabilization of mS47. The removal of the 5' precursor together with the dissociation of Ccm1 may be catalyzed by the 5'-3' exoribonuclease Pet127. Involved in the specific removal of group I introns in mitochondrial encoded transcripts. In Schizosaccharomyces japonicus (strain yFS275 / FY16936) (Fission yeast), this protein is Mitochondrial 15S rRNA processing factor ppr3 (dmr1).